Consider the following 176-residue polypeptide: DELTA-stichotoxin-She4a (176 aa).

Residues 2–11 are plays an important role in the hemolytic activity; sequence ELAGTIIDGA. Residues 10–29 form an N-terminal region region; the sequence is GASLTFEVLDKVLGELGKVS. Phosphocholine is bound by residues serine 53, valine 86, serine 104, proline 106, tyrosine 132, tyrosine 136, and tyrosine 137. The interval 104–119 is trp-rich region, which is important for the binding to lipid membrane; the sequence is SVPFDYNWYSNWWDVK. A Cell attachment site motif is present at residues 142–144; it reads RGD.

In terms of assembly, octamer or nonamer in membranes. Monomer in the soluble state.

Its subcellular location is the secreted. It localises to the nematocyst. The protein resides in the target cell membrane. Functionally, pore-forming protein that forms cations-selective hydrophilic pores of around 1 nm and causes cardiac stimulation and cytolysis. Pore formation is a multi-step process that involves specific recognition of membrane sphingomyelin (but neither cholesterol nor phosphatidylcholine) using aromatic rich region and adjacent phosphocholine (POC) binding site, firm binding to the membrane (mainly driven by hydrophobic interactions) accompanied by the transfer of the N-terminal region to the lipid-water interface and finally pore formation after oligomerization of monomers. Cytolytic effects include red blood cells hemolysis, platelet aggregation and lysis, cytotoxic and cytostatic effects on fibroblasts. Lethality in mammals has been ascribed to severe vasospasm of coronary vessels, cardiac arrhythmia, and inotropic effects. The sequence is that of DELTA-stichotoxin-She4a from Stichodactyla helianthus (Sun anemone).